A 375-amino-acid polypeptide reads, in one-letter code: Chaperone protein DnaJ (375 aa).

One can recognise a J domain in the interval 5–70 (DYYEVLEISR…QKRQAYDRFG (66 aa)). The CR-type zinc-finger motif lies at 133-211 (GKEVTIQIPS…CHGHGRVRRN (79 aa)). Residues Cys-146, Cys-149, Cys-163, Cys-166, Cys-185, Cys-188, Cys-199, and Cys-202 each contribute to the Zn(2+) site. CXXCXGXG motif repeat units lie at residues 146-153 (CEVCRGSG), 163-170 (CATCGGRG), 185-192 (CPQCNGSG), and 199-206 (CTNCHGHG).

It belongs to the DnaJ family. Homodimer. Zn(2+) serves as cofactor.

The protein resides in the cytoplasm. In terms of biological role, participates actively in the response to hyperosmotic and heat shock by preventing the aggregation of stress-denatured proteins and by disaggregating proteins, also in an autonomous, DnaK-independent fashion. Unfolded proteins bind initially to DnaJ; upon interaction with the DnaJ-bound protein, DnaK hydrolyzes its bound ATP, resulting in the formation of a stable complex. GrpE releases ADP from DnaK; ATP binding to DnaK triggers the release of the substrate protein, thus completing the reaction cycle. Several rounds of ATP-dependent interactions between DnaJ, DnaK and GrpE are required for fully efficient folding. Also involved, together with DnaK and GrpE, in the DNA replication of plasmids through activation of initiation proteins. The sequence is that of Chaperone protein DnaJ from Acidithiobacillus ferrooxidans (strain ATCC 23270 / DSM 14882 / CIP 104768 / NCIMB 8455) (Ferrobacillus ferrooxidans (strain ATCC 23270)).